Reading from the N-terminus, the 247-residue chain is Carboxy-S-adenosyl-L-methionine synthase (247 aa).

S-adenosyl-L-methionine is bound by residues Y40, G65–S67, D90–N91, D122–I123, N137, and R204.

Belongs to the class I-like SAM-binding methyltransferase superfamily. Cx-SAM synthase family. In terms of assembly, homodimer.

The catalysed reaction is prephenate + S-adenosyl-L-methionine = carboxy-S-adenosyl-L-methionine + 3-phenylpyruvate + H2O. In terms of biological role, catalyzes the conversion of S-adenosyl-L-methionine (SAM) to carboxy-S-adenosyl-L-methionine (Cx-SAM). The chain is Carboxy-S-adenosyl-L-methionine synthase from Stutzerimonas stutzeri (strain A1501) (Pseudomonas stutzeri).